The chain runs to 238 residues: Ribonuclease HII (238 aa).

The region spanning 23–215 (QRLCGVDEAG…VREALARLPM (193 aa)) is the RNase H type-2 domain. D29, E30, and D124 together coordinate a divalent metal cation.

Belongs to the RNase HII family. Mn(2+) serves as cofactor. Mg(2+) is required as a cofactor.

It is found in the cytoplasm. The catalysed reaction is Endonucleolytic cleavage to 5'-phosphomonoester.. Endonuclease that specifically degrades the RNA of RNA-DNA hybrids. The chain is Ribonuclease HII from Cupriavidus necator (strain ATCC 17699 / DSM 428 / KCTC 22496 / NCIMB 10442 / H16 / Stanier 337) (Ralstonia eutropha).